We begin with the raw amino-acid sequence, 424 residues long: Ornithine aminotransferase (424 aa).

N6-(pyridoxal phosphate)lysine is present on Lys-272. A Glycyl lysine isopeptide (Lys-Gly) (interchain with G-Cter in ubiquitin) cross-link involves residue Lys-390.

This sequence belongs to the class-III pyridoxal-phosphate-dependent aminotransferase family. The cofactor is pyridoxal 5'-phosphate.

The protein localises to the cytoplasm. The catalysed reaction is a 2-oxocarboxylate + L-ornithine = L-glutamate 5-semialdehyde + an L-alpha-amino acid. It participates in amino-acid biosynthesis; L-proline biosynthesis; L-glutamate 5-semialdehyde from L-ornithine: step 1/1. With respect to regulation, by arginine and urea. Functionally, catalyzes the transamination of ornithine into L-glutamate gamma-semialdehyde, the second step of arginine degradation. The sequence is that of Ornithine aminotransferase (CAR2) from Saccharomyces cerevisiae (strain ATCC 204508 / S288c) (Baker's yeast).